Consider the following 121-residue polypeptide: Small ribosomal subunit protein uS13 (121 aa).

A disordered region spans residues 91 to 121 (HKRGLPVRGQRTRTNARTRKGPRRAAASLKK).

This sequence belongs to the universal ribosomal protein uS13 family. As to quaternary structure, part of the 30S ribosomal subunit. Forms a loose heterodimer with protein S19. Forms two bridges to the 50S subunit in the 70S ribosome.

Its function is as follows. Located at the top of the head of the 30S subunit, it contacts several helices of the 16S rRNA. In the 70S ribosome it contacts the 23S rRNA (bridge B1a) and protein L5 of the 50S subunit (bridge B1b), connecting the 2 subunits; these bridges are implicated in subunit movement. Contacts the tRNAs in the A and P-sites. The chain is Small ribosomal subunit protein uS13 from Bordetella petrii (strain ATCC BAA-461 / DSM 12804 / CCUG 43448).